The sequence spans 342 residues: MQTLQTTSLRVSENQLFILDQQALPQETRWLAADNVALLVDHIHTLRVRGAPLIGLSASLLLALLAQRGLNRDALQQALETLRAARPTAVNLMNNLDRMKQALAREDYPQALEAEALRLVEEDKQLCARIAEAGSALVKPGSRLLTHCNTGGLATAGVGTALGVIALAHRQGKVTNVWVDETRPLLQGGRLTAWELGELGVPYQLIADSMAASLMAQGQVDAVWVGADRIAANGDVANKIGTYSLAVLAHYHQIPFYVAAPQTTLDRYCPNGAAIPIEQRAAAEVTGVAGSFGAVQWAPTGAAVYNPAFDVTPAGLISGWVLDSGVVTPAQVAAGAFAPDNG.

Substrate contacts are provided by residues 49 to 51, R86, and Q187; that span reads RGA. D228 functions as the Proton donor in the catalytic mechanism. 238–239 is a substrate binding site; that stretch reads NK.

Belongs to the eIF-2B alpha/beta/delta subunits family. MtnA subfamily.

The enzyme catalyses 5-(methylsulfanyl)-alpha-D-ribose 1-phosphate = 5-(methylsulfanyl)-D-ribulose 1-phosphate. It participates in amino-acid biosynthesis; L-methionine biosynthesis via salvage pathway; L-methionine from S-methyl-5-thio-alpha-D-ribose 1-phosphate: step 1/6. Functionally, catalyzes the interconversion of methylthioribose-1-phosphate (MTR-1-P) into methylthioribulose-1-phosphate (MTRu-1-P). The protein is Methylthioribose-1-phosphate isomerase of Klebsiella pneumoniae subsp. pneumoniae (strain ATCC 700721 / MGH 78578).